The chain runs to 151 residues: Calcium-binding protein SPEC 2C (151 aa).

4 EF-hand domains span residues 10–45 (EQRK…IEIE), 46–78 (LTQE…KAEQ), 81–116 (GKGA…CTDP), and 118–151 (MTKE…QSSY). Asp-23, Asp-25, Asp-27, Lys-29, Glu-34, Asp-59, Asp-61, Ser-63, Glu-70, Asp-94, Asp-96, Ser-98, Ser-100, Glu-105, Asp-131, Asp-135, Glu-137, and Glu-142 together coordinate Ca(2+).

Found in cell lineages giving rise to the aboral ectoderm, a squamous epithelium covering the surface of the late stage embryo and larva.

Functionally, calcium-binding protein involved in larval development and metamorphosis. Likely to function as calcium buffers mediating the transport of calcium from the sea water to the blastocoel where calcium is required for skeleton formation. This Strongylocentrotus purpuratus (Purple sea urchin) protein is Calcium-binding protein SPEC 2C (SPEC2C).